Consider the following 291-residue polypeptide: MIIIGGSATNGIDESLSKILSIPLVKVENKIFPDGESYIRVPSSIRDEEVLLVQTTDYPQDKHLIELFLIAETIRDLGAKKLTAIVPYLAYSRQDRRFKDGEAISIKTILHILSEVGVNTLVVVEPHKPEELSYFKGELKIVHPYHQIARKIKEIIEDPFILAPDRGALDRARKIAEEINAPYSYIEKERDRTTGEVRIKEAPNINLKGKDVVIIDDIISTGGTIVQATRLAYSLGAKSVTAAAIHLLLVGGAKERLREVGVKTLIGTNTINVNDKDIITIDVSQSIALSL.

Residues 34–36 (DGE) and 93–94 (RQ) contribute to the ATP site. 2 residues coordinate Mg(2+): histidine 127 and aspartate 165. Residue lysine 188 is part of the active site. Residues arginine 190, aspartate 216, and 220-224 (STGGT) each bind D-ribose 5-phosphate.

This sequence belongs to the ribose-phosphate pyrophosphokinase family. Class III (archaeal) subfamily. In terms of assembly, homodimer. Requires Mg(2+) as cofactor.

It localises to the cytoplasm. The catalysed reaction is D-ribose 5-phosphate + ATP = 5-phospho-alpha-D-ribose 1-diphosphate + AMP + H(+). It participates in metabolic intermediate biosynthesis; 5-phospho-alpha-D-ribose 1-diphosphate biosynthesis; 5-phospho-alpha-D-ribose 1-diphosphate from D-ribose 5-phosphate (route I): step 1/1. Functionally, involved in the biosynthesis of the central metabolite phospho-alpha-D-ribosyl-1-pyrophosphate (PRPP) via the transfer of pyrophosphoryl group from ATP to 1-hydroxyl of ribose-5-phosphate (Rib-5-P). This chain is Ribose-phosphate pyrophosphokinase, found in Saccharolobus solfataricus (strain ATCC 35092 / DSM 1617 / JCM 11322 / P2) (Sulfolobus solfataricus).